Reading from the N-terminus, the 190-residue chain is Potassium-transporting ATPase KdpC subunit (190 aa).

A helical transmembrane segment spans residues 11–31 (LIVLMSLITGVAYPLVVTGVA).

This sequence belongs to the KdpC family. The system is composed of three essential subunits: KdpA, KdpB and KdpC.

The protein localises to the cell inner membrane. Part of the high-affinity ATP-driven potassium transport (or Kdp) system, which catalyzes the hydrolysis of ATP coupled with the electrogenic transport of potassium into the cytoplasm. This subunit acts as a catalytic chaperone that increases the ATP-binding affinity of the ATP-hydrolyzing subunit KdpB by the formation of a transient KdpB/KdpC/ATP ternary complex. The chain is Potassium-transporting ATPase KdpC subunit from Pseudomonas savastanoi pv. phaseolicola (strain 1448A / Race 6) (Pseudomonas syringae pv. phaseolicola (strain 1448A / Race 6)).